Reading from the N-terminus, the 352-residue chain is MERDFLGLGSKNSPITVKEETSESSRDSAPNRGMNWSFSNKVSASSSQFLSFRPTQEDRHRKSGNYHLPHSGSFMPSSVADVYDSTRKAPYSSVQGVRMFPNSNQHEETNAVSMSMPGFQSHHYAPGGRSFMNNNNNSQPLVGVPIMAPPISILPPPGSIVGTTDIRSSSKPIGSPAQLTIFYAGSVCVYDDISPEKAKAIMLLAGNGSSMPQVFSPPQTHQQVVHHTRASVDSSAMPPSFMPTISYLSPEAGSSTNGLGATKATRGLTSTYHNNQANGSNINCPVPVSCSTNVMAPTVALPLARKASLARFLEKRKERVTSVSPYCLDKKSSTDCRRSMSECISSSLSSAT.

The interval 1–71 is disordered; it reads MERDFLGLGS…KSGNYHLPHS (71 aa). Over residues 17–26 the composition is skewed to basic and acidic residues; it reads VKEETSESSR. The segment covering 34 to 54 has biased composition (polar residues); sequence MNWSFSNKVSASSSQFLSFRP. A Tify domain is found at 172 to 207; it reads PIGSPAQLTIFYAGSVCVYDDISPEKAKAIMLLAGN. The Jas motif lies at 302 to 326; it reads PLARKASLARFLEKRKERVTSVSPY. Residues 304–311 carry the Nuclear localization signal motif; that stretch reads ARKASLAR.

The protein belongs to the TIFY/JAZ family. Homo- and heterodimer. Interacts with COI1, MYC2, MYC3, MYC4, TIFY10A/JAZ1, TIFY10B/JAZ2, TIFY6A/JAZ4, TIFY5A/JAZ8, TIFY7/JAZ9, TIFY9/JAZ10 and TIFY3A/JAZ11. Interacts (via TIFY domain) with AFPH2/NINJA. Ubiquitinated. Targeted for degradation by the SCF(COI1) E3 ubiquitin ligase-proteasome pathway during jasmonate signaling. Srtongly expressed in root tips.

The protein resides in the nucleus. Functionally, repressor of jasmonate responses. Jasmonoyl-isoleucine (JA-Ile) specifically promotes COI1-TIFY6B/JAZ3 interaction. Acts as a negative regulator of MYC2 function. Feed-back regulated by MYC2. This is Protein TIFY 6B (TIFY6B) from Arabidopsis thaliana (Mouse-ear cress).